The following is a 294-amino-acid chain: tRNA-cytidine(32) 2-sulfurtransferase (294 aa).

The PP-loop motif signature appears at 70 to 75 (SGGKDS). Cys145, Cys148, and Cys236 together coordinate [4Fe-4S] cluster.

This sequence belongs to the TtcA family. As to quaternary structure, homodimer. It depends on Mg(2+) as a cofactor. [4Fe-4S] cluster is required as a cofactor.

It is found in the cytoplasm. The enzyme catalyses cytidine(32) in tRNA + S-sulfanyl-L-cysteinyl-[cysteine desulfurase] + AH2 + ATP = 2-thiocytidine(32) in tRNA + L-cysteinyl-[cysteine desulfurase] + A + AMP + diphosphate + H(+). The protein operates within tRNA modification. Functionally, catalyzes the ATP-dependent 2-thiolation of cytidine in position 32 of tRNA, to form 2-thiocytidine (s(2)C32). The sulfur atoms are provided by the cysteine/cysteine desulfurase (IscS) system. The sequence is that of tRNA-cytidine(32) 2-sulfurtransferase from Rhizobium meliloti (strain 1021) (Ensifer meliloti).